A 155-amino-acid chain; its full sequence is Glycosylation-dependent cell adhesion molecule 1 (155 aa).

A signal peptide spans Met1 to Ala18. O-linked (GalNAc...) threonine glycosylation is present at Thr34. Ser48, Ser53, Ser57, Ser59, and Ser65 each carry phosphoserine. Residues Ala74–Pro109 form a disordered region. A compositionally biased stretch (polar residues) spans Gln90–Ser101.

It belongs to the PP3/GlyCAM-1 family. As to expression, highly expressed in whey fraction of camel milk.

This Camelus dromedarius (Dromedary) protein is Glycosylation-dependent cell adhesion molecule 1 (GLYCAM1).